The primary structure comprises 636 residues: Interleukin-27 receptor subunit alpha (636 aa).

Positions 1-32 (MRGGRGAPFWLWPLPKLALLPLLWVLFQRTRP) are cleaved as a signal peptide. Residues 33-516 (QGSAGPLQCY…HLPDNTLRWK (484 aa)) are Extracellular-facing. 2 N-linked (GlcNAc...) asparagine glycosylation sites follow: Asn-51 and Asn-76. In terms of domain architecture, Fibronectin type-III 1 spans 131-231 (PRLGPDVDFS…PILSFQTPPS (101 aa)). Residues 217–221 (WGEWS) carry the WSXWS motif motif. 5 N-linked (GlcNAc...) asparagine glycosylation sites follow: Asn-302, Asn-311, Asn-374, Asn-382, and Asn-467. Fibronectin type-III domains are found at residues 322 to 417 (APRS…LAPL) and 419 to 511 (GPTL…LPDN). Residues 517-537 (VLPGILFLWGLFLLGCGLSLA) traverse the membrane as a helical segment. At 538-636 (TSGRCYHLRH…LGPPRPQVLA (99 aa)) the chain is on the cytoplasmic side. The short motif at 554–562 (VWEKVPDPA) is the Box 1 motif element. The disordered stretch occupies residues 587–636 (EVEEMEPPPVMESSQPAQATAPLDSGYEKHFLPTPEELGLLGPPRPQVLA). Positions 618 to 628 (LPTPEELGLLG) are enriched in low complexity.

The protein belongs to the type I cytokine receptor family. Type 2 subfamily. In terms of assembly, component of a receptor complex composed of IL6ST/GP130, IL27RA/WSX1 and CNTFR which interacts with the neuroprotective peptide humanin. Highly expressed in lymphoid tissues such as spleen, lymph nodes and peripheral blood leukocytes. Weakly expressed in other tissues examined including heart, brain, fetal and adult lung, liver, skeletal muscle, kidney, pancreas, prostate, testis, ovary, small intestine, kidney and colon. In the lymphoid system, higher level expression in CD4+ T-cell subsets than in CD8+ T-cell subsets. Also weaker expression in CD19+ B-cells and monocytes.

The protein localises to the membrane. In terms of biological role, receptor for IL27. Requires IL6ST/GP130 to mediate signal transduction in response to IL27. This signaling system acts through STAT3 and STAT1. Acts as a receptor for the neuroprotective peptide humanin as part of a complex with IL6ST/GP130 and CNTFR. Involved in the regulation of Th1-type immune responses. Also appears to be involved in innate defense mechanisms. This Homo sapiens (Human) protein is Interleukin-27 receptor subunit alpha (IL27RA).